Consider the following 120-residue polypeptide: NAD(P)H-quinone oxidoreductase subunit 3, chloroplastic (120 aa).

The next 3 membrane-spanning stretches (helical) occupy residues 2–22 (FLLY…VIPI), 64–84 (MFAL…PWAL), and 88–108 (ILGV…VLGL).

It belongs to the complex I subunit 3 family. In terms of assembly, NDH is composed of at least 16 different subunits, 5 of which are encoded in the nucleus.

It is found in the plastid. The protein localises to the chloroplast thylakoid membrane. The catalysed reaction is a plastoquinone + NADH + (n+1) H(+)(in) = a plastoquinol + NAD(+) + n H(+)(out). It catalyses the reaction a plastoquinone + NADPH + (n+1) H(+)(in) = a plastoquinol + NADP(+) + n H(+)(out). Its function is as follows. NDH shuttles electrons from NAD(P)H:plastoquinone, via FMN and iron-sulfur (Fe-S) centers, to quinones in the photosynthetic chain and possibly in a chloroplast respiratory chain. The immediate electron acceptor for the enzyme in this species is believed to be plastoquinone. Couples the redox reaction to proton translocation, and thus conserves the redox energy in a proton gradient. In Oenothera argillicola (Appalachian evening primrose), this protein is NAD(P)H-quinone oxidoreductase subunit 3, chloroplastic.